Reading from the N-terminus, the 518-residue chain is MSDYLLQMNGIVKTFDGVKALNGIDIKVRPGECVGLCGENGTGKSTLMKVLSAVYPYGTWDGEILWDGTPLKAQSISETEAAGIVIIHQELTLVPDLSVAENIFMGHELTLPGGRMNYPAMIHRAEVLMRELKVPDMNVALPVSQYGGGYQQLVEIAKALNKKARLLILDEPSSALTRSEIEVLLDIIRDLKAKGVACVYISHKLDEVAAVCDTISVIRDGKHIATTAMSDMDIPKIITQMVGREMSNLYPTEPHEIGEVIFEARNITCYDVDNPGRKRVDDISFALKRGEILGIAGLVGAGRTELVSALFGAYPGRYTGEVWLDGQPVDTRTPLKSIRAGLCMVPEDRKRQGIIPDLGVGQNITLAVLDTYSKMTRIDAEAELGSIDREISRMHLKTASPFLPITSLSGGNQQKAVLAKMLLTRPRVLILDEPTRGVDVGAKYEIYKLMGALAAEGVSIIMVSSELAEVLGVSDRVLVIGEGQLRGDFINHELTQEQVLAAALSHPDAPDNNARKTA.

2 consecutive ABC transporter domains span residues 6–245 (LQMN…VGRE) and 262–507 (FEAR…LSHP). 38–45 (GENGTGKS) contacts ATP.

Belongs to the ABC transporter superfamily. Xylose importer (TC 3.A.1.2.4) family. In terms of assembly, the complex is composed of two ATP-binding proteins (XylG), two transmembrane proteins (XylH) and a solute-binding protein (XylF).

It localises to the cell inner membrane. The enzyme catalyses D-xylose(out) + ATP + H2O = D-xylose(in) + ADP + phosphate + H(+). Its function is as follows. Part of the ABC transporter complex XylFGH involved in xylose import. Responsible for energy coupling to the transport system. This chain is Xylose import ATP-binding protein XylG, found in Pseudomonas savastanoi pv. phaseolicola (strain 1448A / Race 6) (Pseudomonas syringae pv. phaseolicola (strain 1448A / Race 6)).